The sequence spans 511 residues: Probable DNA ligase (511 aa).

Glutamate 208 is an ATP binding site. The active-site N6-AMP-lysine intermediate is the lysine 210. The ATP site is built by arginine 215, arginine 230, glutamate 259, phenylalanine 299, arginine 377, and lysine 383.

This sequence belongs to the ATP-dependent DNA ligase family. It depends on Mg(2+) as a cofactor.

The catalysed reaction is ATP + (deoxyribonucleotide)n-3'-hydroxyl + 5'-phospho-(deoxyribonucleotide)m = (deoxyribonucleotide)n+m + AMP + diphosphate.. Its function is as follows. DNA ligase that seals nicks in double-stranded DNA during DNA replication, DNA recombination and DNA repair. This is Probable DNA ligase from Streptomyces griseus subsp. griseus (strain JCM 4626 / CBS 651.72 / NBRC 13350 / KCC S-0626 / ISP 5235).